The chain runs to 509 residues: Nucleoprotein (509 aa).

Residues 1–404 (MSSVLKAYER…ANTLAKLTTA (404 aa)) form a ncore region. Residues lysine 180, arginine 195, tyrosine 260, tyrosine 350, and arginine 354 each contribute to the RNA site. A ntail region spans residues 405-509 (NRGADTRGGV…LNAALGDLDI (105 aa)). The tract at residues 452-477 (GTHDDEMPPLEEEEEDDTSAGPRTGP) is disordered. Over residues 458-469 (MPPLEEEEEDDT) the composition is skewed to acidic residues.

It belongs to the paramyxoviruses nucleocapsid family. In terms of assembly, homomultimer; forms the nucleocapsid. Binds to the viral genomic RNA. N0 interacts with the phosphoprotein (via N-terminus); this interaction allows P to chaperon N0 to avoid N polymerization before encapsidation. Interacts as N-RNA template with the phosphoprotein (via C-terminus); this interaction positions the polymerase on the template.

The protein resides in the virion. The protein localises to the host cytoplasm. In terms of biological role, forms the helical nucleocapsid (NC), protecting the genome from nucleases. The encapsidated genomic RNA serves as template for transcription and replication; encapsidation by N is coupled to RNA synthesis. Forms the encapsidation complex with the phosphoprotein protein P. Before encapsidation, the newly synthesized free N protein, so-called N0, is chaperoned by P. The polypeptide is Nucleoprotein (NP) (Canis lupus familiaris (Dog)).